A 486-amino-acid chain; its full sequence is MSFLDDEKWTGRVFTGSWERAAGGDAAVIEPATGDELGRVGIASPQDLAASAAKAAEAQRAWAATSFQERAAVLRRAGDLWQQHAAELKDWLIRESGSIPGKADFELHVAAQECYEAAALPSHPTGEVLPSEAPRLSMARRVPAGVVGVIAPFNAPLILSIRSVAPALALGNSVVLKPDPRTAVCGGVALARVFEEAGLPAGVLHVLPGGPDVGAALVEDKHVRVISFTGSTAAGRAVGESAGRHLKRAHLELGGNSALIVLDDADLEQAMSAAAWGSFFHQGQICMTTGRHLVHASLYDEYVDRLADKASHLPVGNPFTEQVALGPIIDAKQRDKIHGLVTSSVDAGAKVAAGGTYEDLFYRATVLAGAGPSVPAYDQEVFGPVAPVAKFTSLDEAAKLASESEYGLSLGIITADVAKGLALADRIPTGIAHINDQTVNDEALAPFGGVFDSGTGSRFGGPAANIEAFTETRWVTMRGDVAGYPF.

Residues 210-211 (GP), 230-231 (GS), and 252-254 (ELG) contribute to the NAD(+) site. The Proton acceptor role is filled by Glu-252. The active-site Nucleophile is Cys-286. An NAD(+)-binding site is contributed by 380–382 (EVF).

The protein belongs to the aldehyde dehydrogenase family.

It catalyses the reaction vanillin + NAD(+) + H2O = vanillate + NADH + 2 H(+). Catalyzes NAD(+)-dependent oxidation of vanillin to vanillate. Also oxidizes other aromatic aldehydes including benzaldehyde, coniferyl aldehyde and cinnamaldehyde, but has a preference for vanillin. Not active with NADP(+). Involved in the degradation pathway of lignin-derived aromatic compounds of plant cell walls. Catalyzes the conversion of vanillin to vanillate due to toxicity of vanillin to the cells. This chain is Vanillin dehydrogenase, found in Amycolatopsis sp. (strain ATCC 39116 / 75iv2).